We begin with the raw amino-acid sequence, 610 residues long: Sensor protein kinase WalK (610 aa).

2 consecutive transmembrane segments (helical) span residues 14 to 34 (LVIVYVLLIIIGMQIIGLYFT) and 184 to 204 (IFIVGTGISLLITVILGFFIA). The HAMP domain occupies 205 to 257 (RTITKPITDMRNQTVEMSKGNYTQRVKIYGNDEIGELALAFNNLSKRVQEAQA). Positions 262 to 333 (EKRRLDSVIT…IQENNDSFLL (72 aa)) constitute a PAS domain. In terms of domain architecture, PAC spans 326 to 379 (ENNDSFLLDINENEGIIARVNFSTIVQETGFVTGYIAVLHDVTEQQQVERERRE). One can recognise a Histidine kinase domain in the interval 383 to 601 (NVSHELRTPL…SIFITLPCEV (219 aa)). Position 386 is a phosphohistidine; by autocatalysis (histidine 386).

In terms of processing, autophosphorylated.

It localises to the cell membrane. It carries out the reaction ATP + protein L-histidine = ADP + protein N-phospho-L-histidine.. In terms of biological role, member of the two-component regulatory system WalK/WalR. WalK functions as a sensor protein kinase which is autophosphorylated at a histidine residue and transfers its phosphate group to WalR. This Staphylococcus saprophyticus subsp. saprophyticus (strain ATCC 15305 / DSM 20229 / NCIMB 8711 / NCTC 7292 / S-41) protein is Sensor protein kinase WalK (walK).